The following is a 98-amino-acid chain: uncharacterized protein (98 aa).

This is an uncharacterized protein from Human cytomegalovirus (strain AD169) (HHV-5).